An 814-amino-acid polypeptide reads, in one-letter code: Phenylalanine--tRNA ligase beta subunit (814 aa).

The tRNA-binding domain maps to 39–153; it reads SKNVNGVVLG…LKHELGTPVS (115 aa). The region spanning 414–500 is the B5 domain; that stretch reads NEDIFIKLRR…RLIGYDRFDL (87 aa). Positions 478, 484, 487, and 488 each coordinate Mg(2+). Residues 720 to 813 enclose the FDX-ACB domain; that stretch reads PIVPKIERDI…IEKSFQTKLR (94 aa).

Belongs to the phenylalanyl-tRNA synthetase beta subunit family. Type 1 subfamily. As to quaternary structure, tetramer of two alpha and two beta subunits. Mg(2+) is required as a cofactor.

Its subcellular location is the cytoplasm. It catalyses the reaction tRNA(Phe) + L-phenylalanine + ATP = L-phenylalanyl-tRNA(Phe) + AMP + diphosphate + H(+). In Prochlorococcus marinus (strain MIT 9312), this protein is Phenylalanine--tRNA ligase beta subunit.